The primary structure comprises 400 residues: tRNA(Ile)-lysidine synthase (400 aa).

An ATP-binding site is contributed by 20-25 (SGGLDS).

It belongs to the tRNA(Ile)-lysidine synthase family.

Its subcellular location is the cytoplasm. The enzyme catalyses cytidine(34) in tRNA(Ile2) + L-lysine + ATP = lysidine(34) in tRNA(Ile2) + AMP + diphosphate + H(+). Its function is as follows. Ligates lysine onto the cytidine present at position 34 of the AUA codon-specific tRNA(Ile) that contains the anticodon CAU, in an ATP-dependent manner. Cytidine is converted to lysidine, thus changing the amino acid specificity of the tRNA from methionine to isoleucine. The sequence is that of tRNA(Ile)-lysidine synthase from Wigglesworthia glossinidia brevipalpis.